The following is a 221-amino-acid chain: MRLILLGAPGAGKGTQAKFICEKFGIPQISTGDMLRAAVKAGTPLGVEAKKVMDAGGLVSDDIIIGLVKDRLKEDDCKNGYLFDGFPRTIPQAEAMKEAGVAIDYVLEIDVPFDAIIERMSGRRVHVASGRTYHVKYNPPKTEGVDDETGEALIQRDDDKEETVKKRLDVYSQQTRPLVDYYSEWAAKGDASAKVAPPQYRKILGVGNVDEITARVFEALK.

10 to 15 (GAGKGT) contacts ATP. The NMP stretch occupies residues 30 to 59 (STGDMLRAAVKAGTPLGVEAKKVMDAGGLV). AMP-binding positions include Thr-31, Arg-36, 57 to 59 (GLV), 85 to 88 (GFPR), and Gln-92. The segment at 122-159 (GRRVHVASGRTYHVKYNPPKTEGVDDETGEALIQRDDD) is LID. ATP is bound by residues Arg-123 and 132-133 (TY). Residues Arg-156 and Arg-167 each coordinate AMP. Residue Gly-207 coordinates ATP.

It belongs to the adenylate kinase family. In terms of assembly, monomer.

Its subcellular location is the cytoplasm. The enzyme catalyses AMP + ATP = 2 ADP. It participates in purine metabolism; AMP biosynthesis via salvage pathway; AMP from ADP: step 1/1. Catalyzes the reversible transfer of the terminal phosphate group between ATP and AMP. Plays an important role in cellular energy homeostasis and in adenine nucleotide metabolism. The sequence is that of Adenylate kinase from Cupriavidus necator (strain ATCC 17699 / DSM 428 / KCTC 22496 / NCIMB 10442 / H16 / Stanier 337) (Ralstonia eutropha).